The following is a 170-amino-acid chain: Bifunctional protein PyrR (170 aa).

The PRPP-binding motif lies at 90–102; it reads LVLVDDVLMSGRT.

This sequence belongs to the purine/pyrimidine phosphoribosyltransferase family. PyrR subfamily.

The catalysed reaction is UMP + diphosphate = 5-phospho-alpha-D-ribose 1-diphosphate + uracil. Regulates the transcription of the pyrimidine nucleotide (pyr) operon in response to exogenous pyrimidines. In terms of biological role, also displays a weak uracil phosphoribosyltransferase activity which is not physiologically significant. The chain is Bifunctional protein PyrR from Pseudomonas paraeruginosa (strain DSM 24068 / PA7) (Pseudomonas aeruginosa (strain PA7)).